We begin with the raw amino-acid sequence, 276 residues long: Small ribosomal subunit protein uS2 (276 aa).

It belongs to the universal ribosomal protein uS2 family.

In Chlamydia abortus (strain DSM 27085 / S26/3) (Chlamydophila abortus), this protein is Small ribosomal subunit protein uS2.